Consider the following 409-residue polypeptide: Sulfide-quinone reductase (409 aa).

FAD contacts are provided by residues 8–12 (GGRFG), 34–35 (NK), and Cys-129. The Cysteine persulfide intermediate role is filled by Cys-178. 3 residues coordinate FAD: Asn-271, Asp-307, and Gly-317. Cys-350 (cysteine persulfide intermediate) is an active-site residue.

The protein belongs to the SQRD family. Monomer. It depends on FAD as a cofactor.

Its subcellular location is the membrane. It carries out the reaction n a quinone + n hydrogen sulfide + n H(+) = polysulfur(n-2) + n a quinol. Its activity is regulated as follows. Inhibited by the quinone analog 2-heptyl-4-hydroxyquinolone N-oxide (HQNO). Inactivated by iodoacetamide treatment. Inhibited by KCN. Functionally, catalyzes the oxidation of sulfides, such as hydrogen sulfide, with the help of a quinone. Has the highest activity with caldariella quinone and decylubiquinone, and lower activity with naphtoquinones. Consecutive reaction cycles lead to the accumulation of a polysulfide product on the active site Cys residues; these products are released when they exceed a critical length, typically as cyclooctasulfur. This chain is Sulfide-quinone reductase, found in Acidianus ambivalens (Desulfurolobus ambivalens).